Consider the following 333-residue polypeptide: Nucleoid-associated protein APL_0429 (333 aa).

The protein belongs to the YejK family.

It is found in the cytoplasm. Its subcellular location is the nucleoid. The sequence is that of Nucleoid-associated protein APL_0429 from Actinobacillus pleuropneumoniae serotype 5b (strain L20).